The chain runs to 132 residues: Protein FasE (132 aa).

The polypeptide is Protein FasE (fasE) (Escherichia coli).